Consider the following 318-residue polypeptide: Probable tyrosine phosphatase protein N1 (318 aa).

One can recognise a Tyrosine-protein phosphatase domain in the interval 26 to 292; it reads IVRLEHHQVI…LILQPGYYVL (267 aa). The active-site Phosphocysteine intermediate is the cysteine 233.

This sequence belongs to the protein-tyrosine phosphatase family.

It carries out the reaction O-phospho-L-tyrosyl-[protein] + H2O = L-tyrosyl-[protein] + phosphate. In Microplitis demolitor bracovirus (isolate Webb) (MdBV), this protein is Probable tyrosine phosphatase protein N1 (N3).